The chain runs to 61 residues: Small ribosomal subunit protein uS14 (61 aa).

C24, C27, C40, and C43 together coordinate Zn(2+).

The protein belongs to the universal ribosomal protein uS14 family. Zinc-binding uS14 subfamily. In terms of assembly, part of the 30S ribosomal subunit. Contacts proteins S3 and S10. The cofactor is Zn(2+).

Its function is as follows. Binds 16S rRNA, required for the assembly of 30S particles and may also be responsible for determining the conformation of the 16S rRNA at the A site. The protein is Small ribosomal subunit protein uS14 of Clostridium botulinum (strain 657 / Type Ba4).